Consider the following 266-residue polypeptide: F-actin-capping protein subunit beta (266 aa).

It belongs to the F-actin-capping protein beta subunit family. As to quaternary structure, component of the F-actin capping complex, composed of a heterodimer of an alpha and a beta subunit.

Its subcellular location is the cytoplasm. It localises to the cytoskeleton. The protein localises to the actin patch. F-actin-capping proteins bind in a Ca(2+)-independent manner to the fast growing ends of actin filaments (barbed end) thereby blocking the exchange of subunits at these ends. Unlike other capping proteins (such as gelsolin and severin), these proteins do not sever actin filaments. This Aspergillus oryzae (strain ATCC 42149 / RIB 40) (Yellow koji mold) protein is F-actin-capping protein subunit beta (cap2).